We begin with the raw amino-acid sequence, 504 residues long: Plasma protease C1 inhibitor (504 aa).

An N-terminal signal peptide occupies residues 1–22; that stretch reads MASKLTPLTLLLLLLAGDRAFS. The tract at residues 23-75 is disordered; sequence DSEVTSHSSQDPLVVQEGSRDSVPERDGSRSPIEHTGQSSTWPTTSGSTKISN. The segment covering 24 to 33 has biased composition (polar residues); it reads SEVTSHSSQD. Residues 40-55 are compositionally biased toward basic and acidic residues; it reads GSRDSVPERDGSRSPI. Residues 58–75 show a composition bias toward polar residues; that stretch reads TGQSSTWPTTSGSTKISN. N-linked (GlcNAc...) asparagine glycans are attached at residues N75, N83, N107, N243, and N356. The tract at residues 94 to 132 is disordered; it reads AQLPEDSPSQSPVNSSSPPSTASAPPTQAPTEPLCPEPL. Over residues 100–125 the composition is skewed to low complexity; sequence SPSQSPVNSSSPPSTASAPPTQAPTE.

It belongs to the serpin family. As to quaternary structure, interacts with MASP1.

It is found in the secreted. Its function is as follows. Serine protease inhibitor, which acrs as a regulator of the classical complement pathway. Forms a proteolytically inactive stoichiometric complex with the C1r or C1s proteases. May also regulate blood coagulation, fibrinolysis and the generation of kinins. Very efficient inhibitor of FXIIa. Inhibits chymotrypsin and kallikrein. The sequence is that of Plasma protease C1 inhibitor (Serping1) from Rattus norvegicus (Rat).